Reading from the N-terminus, the 337-residue chain is Heme A synthase (337 aa).

Helical transmembrane passes span 6–26 (ITKW…IGGI), 87–107 (FIHR…LIYF), 119–139 (LPYI…WYMV), 154–174 (LAFH…QLIK), and 192–212 (LIFS…GALV). His-256 contributes to the heme binding site. 3 consecutive transmembrane segments (helical) span residues 258–278 (LVGY…LKIE), 285–305 (IAYF…LTLL), and 308–328 (VPII…SIII). His-316 serves as a coordination point for heme.

Belongs to the COX15/CtaA family. Type 2 subfamily. Interacts with CtaB. The cofactor is heme b.

It is found in the cell membrane. The catalysed reaction is Fe(II)-heme o + 2 A + H2O = Fe(II)-heme a + 2 AH2. Its pathway is porphyrin-containing compound metabolism; heme A biosynthesis; heme A from heme O: step 1/1. Catalyzes the conversion of heme O to heme A by two successive hydroxylations of the methyl group at C8. The first hydroxylation forms heme I, the second hydroxylation results in an unstable dihydroxymethyl group, which spontaneously dehydrates, resulting in the formyl group of heme A. This Rickettsia conorii (strain ATCC VR-613 / Malish 7) protein is Heme A synthase.